A 363-amino-acid polypeptide reads, in one-letter code: MSNEATVIKVTGQSVNENYDVVVGRGLLDTLPAKLGERVRRVLVIHPRALRLTGDTVRDELEAAGFTALTAEIPDAEEGKHIQVAAFCWQVLGQNDFTRSDAIVAVGGGAVTDLAGFVAATWLRGVKVIHMPTSLLGMVDASVGGKTGINTAEGKNLVGSFHPPAAVLADLDTLQTLPKNELISGMAEVIKCGFIADPAILDLVEKNTDAVMDPGSDVVRELIERAISVKADVVSQDLKESGLREILNYGHTLGHAIELVERYSWRHGAAVSVGMMFAAELSRSVGRLSDADADRHRTILESLGLPITYRRDRWQGLLDGMRRDKKSRGDLLRFVVLDGVAKPGILEVPDTSLLFAAYQEIAS.

NAD(+) contacts are provided by residues 75 to 80, 109 to 113, 133 to 134, Lys-146, Lys-155, and 173 to 176; these read DAEEGK, GAVTD, TS, and TLQT. Zn(2+) is bound by residues Glu-188, His-251, and His-267.

Belongs to the sugar phosphate cyclases superfamily. Dehydroquinate synthase family. The cofactor is Co(2+). Zn(2+) is required as a cofactor. NAD(+) serves as cofactor.

It localises to the cytoplasm. The enzyme catalyses 7-phospho-2-dehydro-3-deoxy-D-arabino-heptonate = 3-dehydroquinate + phosphate. Its pathway is metabolic intermediate biosynthesis; chorismate biosynthesis; chorismate from D-erythrose 4-phosphate and phosphoenolpyruvate: step 2/7. In terms of biological role, catalyzes the conversion of 3-deoxy-D-arabino-heptulosonate 7-phosphate (DAHP) to dehydroquinate (DHQ). The polypeptide is 3-dehydroquinate synthase (Paenarthrobacter aurescens (strain TC1)).